The following is a 65-amino-acid chain: Large ribosomal subunit protein bL35 (65 aa).

It belongs to the bacterial ribosomal protein bL35 family.

The chain is Large ribosomal subunit protein bL35 from Desulfitobacterium hafniense (strain DSM 10664 / DCB-2).